The chain runs to 750 residues: Photosystem I P700 chlorophyll a apoprotein A1 (750 aa).

The next 8 helical transmembrane spans lie at Val-70–Ala-93, Leu-156–His-179, Leu-195–Leu-219, Ile-291–Tyr-309, Trp-346–Tyr-369, Leu-385–Val-411, Ala-433–His-455, and Phe-531–Leu-549. [4Fe-4S] cluster-binding residues include Cys-573 and Cys-582. 2 consecutive transmembrane segments (helical) span residues His-589–Trp-610 and Leu-664–Phe-686. Residue His-675 coordinates chlorophyll a'. Met-683 and Tyr-691 together coordinate chlorophyll a. Phylloquinone is bound at residue Trp-692. Residues Ala-724 to Ala-744 traverse the membrane as a helical segment.

This sequence belongs to the PsaA/PsaB family. The PsaA/B heterodimer binds the P700 chlorophyll special pair and subsequent electron acceptors. PSI consists of a core antenna complex that captures photons, and an electron transfer chain that converts photonic excitation into a charge separation. The eukaryotic PSI reaction center is composed of at least 11 subunits. It depends on P700 is a chlorophyll a/chlorophyll a' dimer, A0 is one or more chlorophyll a, A1 is one or both phylloquinones and FX is a shared 4Fe-4S iron-sulfur center. as a cofactor.

It localises to the plastid. The protein resides in the chloroplast thylakoid membrane. The enzyme catalyses reduced [plastocyanin] + hnu + oxidized [2Fe-2S]-[ferredoxin] = oxidized [plastocyanin] + reduced [2Fe-2S]-[ferredoxin]. Its function is as follows. PsaA and PsaB bind P700, the primary electron donor of photosystem I (PSI), as well as the electron acceptors A0, A1 and FX. PSI is a plastocyanin-ferredoxin oxidoreductase, converting photonic excitation into a charge separation, which transfers an electron from the donor P700 chlorophyll pair to the spectroscopically characterized acceptors A0, A1, FX, FA and FB in turn. Oxidized P700 is reduced on the lumenal side of the thylakoid membrane by plastocyanin. This is Photosystem I P700 chlorophyll a apoprotein A1 from Olimarabidopsis pumila (Dwarf rocket).